Here is a 507-residue protein sequence, read N- to C-terminus: Histone-lysine N-methyltransferase set-18 (507 aa).

8 residues coordinate Zn(2+): cysteine 49, cysteine 52, cysteine 65, cysteine 68, cysteine 74, cysteine 78, histidine 86, and cysteine 90. The MYND-type zinc finger occupies 49 to 90 (CANCLRGPAPGEKLLRCGGCNFSMYCSKECQATAWLVHKPEC).

The protein belongs to the class V-like SAM-binding methyltransferase superfamily. Histone-lysine methyltransferase family. Expressed in pharyngeal and body wall muscles.

It catalyses the reaction L-lysyl(36)-[histone H3] + 2 S-adenosyl-L-methionine = N(6),N(6)-dimethyl-L-lysyl(36)-[histone H3] + 2 S-adenosyl-L-homocysteine + 2 H(+). Functionally, histone methyltransferase. Specifically methylates 'Lys-36' of histone H3, inducing di-methylation. Plays a role in modulating lifespan and oxidative stress resistance, in a manner dependent upon daf-16/Forkhead box protein O and the Insulin/IGF-1-like signaling (IIS) mediated pathway. Represses transcription of daf-16 isoform a, perhaps by methylating histone H3 at the daf-16 promoter, which in turn leads to recruitment of histone deacetylases and thus modulation of expression. The protein is Histone-lysine N-methyltransferase set-18 of Caenorhabditis elegans.